The sequence spans 242 residues: Pyridoxine 5'-phosphate synthase (242 aa).

Asn-6 is a binding site for 3-amino-2-oxopropyl phosphate. Residue 8-9 participates in 1-deoxy-D-xylulose 5-phosphate binding; that stretch reads DH. 3-amino-2-oxopropyl phosphate is bound at residue Arg-17. His-42 functions as the Proton acceptor in the catalytic mechanism. 1-deoxy-D-xylulose 5-phosphate contacts are provided by Arg-44 and His-49. Glu-69 functions as the Proton acceptor in the catalytic mechanism. Position 99 (Thr-99) interacts with 1-deoxy-D-xylulose 5-phosphate. Residue His-193 is the Proton donor of the active site. 3-amino-2-oxopropyl phosphate-binding positions include Gly-194 and 217–218; that span reads GH.

This sequence belongs to the PNP synthase family. As to quaternary structure, homooctamer; tetramer of dimers.

It localises to the cytoplasm. The catalysed reaction is 3-amino-2-oxopropyl phosphate + 1-deoxy-D-xylulose 5-phosphate = pyridoxine 5'-phosphate + phosphate + 2 H2O + H(+). Its pathway is cofactor biosynthesis; pyridoxine 5'-phosphate biosynthesis; pyridoxine 5'-phosphate from D-erythrose 4-phosphate: step 5/5. Functionally, catalyzes the complicated ring closure reaction between the two acyclic compounds 1-deoxy-D-xylulose-5-phosphate (DXP) and 3-amino-2-oxopropyl phosphate (1-amino-acetone-3-phosphate or AAP) to form pyridoxine 5'-phosphate (PNP) and inorganic phosphate. The polypeptide is Pyridoxine 5'-phosphate synthase (Aquifex aeolicus (strain VF5)).